The chain runs to 291 residues: Formamidopyrimidine-DNA glycosylase (291 aa).

Catalysis depends on P2, which acts as the Schiff-base intermediate with DNA. Catalysis depends on E3, which acts as the Proton donor. K60 serves as the catalytic Proton donor; for beta-elimination activity. Residues H97, R116, and R161 each coordinate DNA. The FPG-type zinc-finger motif lies at 246–280 (WVYNRAGEPCRVCGMPIQRIRLAGRSSHFCSECQT). Residue R270 is the Proton donor; for delta-elimination activity of the active site.

Belongs to the FPG family. In terms of assembly, monomer. Zn(2+) serves as cofactor.

The enzyme catalyses Hydrolysis of DNA containing ring-opened 7-methylguanine residues, releasing 2,6-diamino-4-hydroxy-5-(N-methyl)formamidopyrimidine.. It carries out the reaction 2'-deoxyribonucleotide-(2'-deoxyribose 5'-phosphate)-2'-deoxyribonucleotide-DNA = a 3'-end 2'-deoxyribonucleotide-(2,3-dehydro-2,3-deoxyribose 5'-phosphate)-DNA + a 5'-end 5'-phospho-2'-deoxyribonucleoside-DNA + H(+). Its function is as follows. Involved in base excision repair of DNA damaged by oxidation or by mutagenic agents. Acts as a DNA glycosylase that recognizes and removes damaged bases. Has a preference for oxidized purines, such as 7,8-dihydro-8-oxoguanine (8-oxoG). Has AP (apurinic/apyrimidinic) lyase activity and introduces nicks in the DNA strand. Cleaves the DNA backbone by beta-delta elimination to generate a single-strand break at the site of the removed base with both 3'- and 5'-phosphates. The protein is Formamidopyrimidine-DNA glycosylase of Nostoc punctiforme (strain ATCC 29133 / PCC 73102).